The following is a 226-amino-acid chain: Membrane protein (226 aa).

Residues 1-11 lie on the Virion surface side of the membrane; the sequence is MSNGSIPVDEV. Residues 12–32 traverse the membrane as a helical segment; it reads IEHLRNWNFTWNIILTILLVV. Residues 33-41 are Intravirion-facing; the sequence is LQYGHYKYS. Residues 42–62 form a helical membrane-spanning segment; that stretch reads VFLYGVKMAILWILWPLVLAL. Topologically, residues 63-75 are virion surface; it reads SLFDAWASFQVNW. Residues 76–96 traverse the membrane as a helical segment; the sequence is VFFAFSILMACITLMLWIMYF. The Intravirion portion of the chain corresponds to 97–226; sequence VNSIRLWRRT…TDSEKVPHLV (130 aa). Positions 200–216 are interaction with N protein; it reads RSKHGDYSAVSNPSAVL.

Belongs to the alphacoronaviruses M protein family. Homomultimer. Interacts with envelope E protein in the budding compartment of the host cell, which is located between endoplasmic reticulum and the Golgi complex. Forms a complex with HE and S proteins. Interacts with nucleocapsid N protein. This interaction probably participates in RNA packaging into the virus.

The protein localises to the virion membrane. It is found in the host Golgi apparatus membrane. Component of the viral envelope that plays a central role in virus morphogenesis and assembly via its interactions with other viral proteins. The chain is Membrane protein from Sus scrofa (Pig).